We begin with the raw amino-acid sequence, 262 residues long: Mediator of RNA polymerase II transcription subunit 8 (262 aa).

The stretch at 168 to 211 forms a coiled coil; that stretch reads LEEKEMGVKNVITGLKRQLDEGDEEDEEEEEEEEDMQGEEMEVV. A disordered region spans residues 183–206; the sequence is KRQLDEGDEEDEEEEEEEEDMQGE. Residues 188-206 show a composition bias toward acidic residues; sequence EGDEEDEEEEEEEEDMQGE.

The protein belongs to the Mediator complex subunit 8 family. As to quaternary structure, component of the Mediator complex.

The protein resides in the nucleus. In terms of biological role, component of the Mediator complex, a coactivator involved in the regulated transcription of nearly all RNA polymerase II-dependent genes. Mediator functions as a bridge to convey information from gene-specific regulatory proteins to the basal RNA polymerase II transcription machinery. Mediator is recruited to promoters by direct interactions with regulatory proteins and serves as a scaffold for the assembly of a functional preinitiation complex with RNA polymerase II and the general transcription factors. The sequence is that of Mediator of RNA polymerase II transcription subunit 8 (MED8) from Coccidioides immitis (strain RS) (Valley fever fungus).